The sequence spans 235 residues: N-alpha-acetyltransferase 10 (235 aa).

At methionine 1 the chain carries N-acetylmethionine. An interaction with NAA15 region spans residues 1-58 (MNIRNARPEDLMNMQHCNLLCLPENYQMKYYFYHGLSWPQLSYIAEDENGKIVGYVLA). An N-acetyltransferase domain is found at 1-152 (MNIRNARPED…DAYAMKRDLT (152 aa)). Position 136 is an N6-acetyllysine; by autocatalysis (lysine 136). Residues 196 to 213 (EEKGLAAEDSGGDSKDLS) are compositionally biased toward basic and acidic residues. The segment at 196–235 (EEKGLAAEDSGGDSKDLSEVSETTESTDVKDSSEASDSAS) is disordered. Serine 205 carries the post-translational modification Phosphoserine. A Phosphoserine; by IKKB modification is found at serine 209. Residues serine 213 and serine 216 each carry the phosphoserine modification.

Belongs to the acetyltransferase family. ARD1 subfamily. In terms of assembly, component of the N-terminal acetyltransferase A complex (also called the NatA complex) composed of NAA10 and NAA15. Interacts with NAA15. Component of the N-terminal acetyltransferase A (NatA)/HYPK complex at least composed of NAA10, NAA15 and HYPK, which has N-terminal acetyltransferase activity. In complex with NAA15, interacts with HYPK. Component of the N-terminal acetyltransferase E (NatE) complex at least composed of NAA10, NAA15 and NAA50. Within the complex interacts with NAA15; the interaction is required for binding to NAAT50. Interacts with NAAT50. The interaction of the NatA complex with NAA50 reduces the acetylation activity of the NatA complex. Component of the N-terminal acetyltransferase E (NatE)/HYPK complex at least composed of NAA10, NAA15, NAA50 and HYPK. In complex with NAA15, interacts with HYPK; the interaction with HYPK reduces the capacity of the NatA complex to interact with NAA50. Interacts with HIF1A (via its ODD domain); the interaction increases HIF1A protein stability during normoxia, an down-regulates it when induced by hypoxia. Interacts with the ribosome. Binds to MYLK. Interacts with NAA16. Interacts (via its C-terminal domain) with TSC2, leading to its acetylation. Interacts with IKBKB. Interacts with HSPA1A and HSPA1B leading to its acetylation. Post-translationally, cleaved by caspases during apoptosis. In terms of processing, phosphorylation by IKBKB/IKKB at Ser-209 destabilises NAA10 and promotes its proteasome-mediated degradation. Autoacetylated at Lys-136 which stimulates its catalytic activity. Ubiquitous.

It is found in the cytoplasm. It localises to the nucleus. The enzyme catalyses N-terminal glycyl-[protein] + acetyl-CoA = N-terminal N(alpha)-acetylglycyl-[protein] + CoA + H(+). It catalyses the reaction N-terminal L-alanyl-[protein] + acetyl-CoA = N-terminal N(alpha)-acetyl-L-alanyl-[protein] + CoA + H(+). The catalysed reaction is N-terminal L-seryl-[protein] + acetyl-CoA = N-terminal N(alpha)-acetyl-L-seryl-[protein] + CoA + H(+). It carries out the reaction N-terminal L-valyl-[protein] + acetyl-CoA = N-terminal N(alpha)-acetyl-L-valyl-[protein] + CoA + H(+). The enzyme catalyses N-terminal L-cysteinyl-[protein] + acetyl-CoA = N-terminal N(alpha)-acetyl-L-cysteinyl-[protein] + CoA + H(+). It catalyses the reaction N-terminal L-threonyl-[protein] + acetyl-CoA = N-terminal N(alpha)-acetyl-L-threonyl-[protein] + CoA + H(+). Catalytic subunit of the N-terminal acetyltransferase A (NatA) complex which displays alpha (N-terminal) acetyltransferase activity. Acetylates amino termini that are devoid of initiator methionine. The alpha (N-terminal) acetyltransferase activity may be important for vascular, hematopoietic and neuronal growth and development. Without NAA15, displays epsilon (internal) acetyltransferase activity towards HIF1A, thereby promoting its degradation. Represses MYLK kinase activity by acetylation, and thus represses tumor cell migration. Acetylates, and stabilizes TSC2, thereby repressing mTOR activity and suppressing cancer development. Acetylates HSPA1A and HSPA1B at 'Lys-77' which enhances its chaperone activity and leads to preferential binding to co-chaperone HOPX. Acetylates HIST1H4A. Acts as a negative regulator of sister chromatid cohesion during mitosis. The chain is N-alpha-acetyltransferase 10 (Naa10) from Mus musculus (Mouse).